A 331-amino-acid polypeptide reads, in one-letter code: Nucleotide sugar transporter SLC35B4 (331 aa).

11 helical membrane passes run 4 to 24 (ALAV…LELL), 30 to 50 (GCGN…GFLF), 59 to 79 (PAIP…VSVV), 92 to 112 (LHMI…IIIL), 117 to 137 (SIFK…CTFM), 153 to 173 (GFQA…ALLM), 201 to 221 (ALPL…AVLF), 229 to 249 (IPVI…NIIT), 251 to 267 (YVCI…CASL), 268 to 288 (TVTL…ILYF), and 291 to 311 (PFTL…LMYT). Residues 326-331 (KDSKKN) carry the Mediates endoplasmic reticulum retention motif.

The protein belongs to the nucleotide-sugar transporter family. SLC35B subfamily.

It is found in the endoplasmic reticulum membrane. The enzyme catalyses UDP-N-acetyl-alpha-D-glucosamine(in) + UDP-alpha-D-glucuronate(out) = UDP-N-acetyl-alpha-D-glucosamine(out) + UDP-alpha-D-glucuronate(in). The catalysed reaction is UDP-alpha-D-xylose(in) + UDP-alpha-D-glucuronate(out) = UDP-alpha-D-xylose(out) + UDP-alpha-D-glucuronate(in). Functionally, antiporter that transports nucleotide sugars across the endoplasmic reticulum (ER) membrane in exchange for another nucleotide sugar. May couple UDP-alpha-D-glucuronate (UDP-GlcA) or UDP-alpha-D-xylose (UDP-Xyl) efflux to UDP-alpha-D-glucuronate (UDP-GlcA) influx into the ER lumen, which in turn stimulates glucuronidation and excretion of endobiotics and xenobiotics. Its function is as follows. Has UDP-GlcA:UDP-GlcNAc antiporter activity. The chain is Nucleotide sugar transporter SLC35B4 (SLC35B4) from Homo sapiens (Human).